A 475-amino-acid polypeptide reads, in one-letter code: Ribulose bisphosphate carboxylase large chain (475 aa).

The propeptide occupies Met1 to Ser2. Pro3 carries the N-acetylproline modification. Residue Lys14 is modified to N6,N6,N6-trimethyllysine. Residues Asn123 and Thr173 each contribute to the substrate site. The active-site Proton acceptor is Lys175. Position 177 (Lys177) interacts with substrate. Positions 201, 203, and 204 each coordinate Mg(2+). The residue at position 201 (Lys201) is an N6-carboxylysine. His294 serves as the catalytic Proton acceptor. 3 residues coordinate substrate: Arg295, His327, and Ser379.

It belongs to the RuBisCO large chain family. Type I subfamily. In terms of assembly, heterohexadecamer of 8 large chains and 8 small chains; disulfide-linked. The disulfide link is formed within the large subunit homodimers. The cofactor is Mg(2+). Post-translationally, the disulfide bond which can form in the large chain dimeric partners within the hexadecamer appears to be associated with oxidative stress and protein turnover.

The protein localises to the plastid. Its subcellular location is the chloroplast. The catalysed reaction is 2 (2R)-3-phosphoglycerate + 2 H(+) = D-ribulose 1,5-bisphosphate + CO2 + H2O. It carries out the reaction D-ribulose 1,5-bisphosphate + O2 = 2-phosphoglycolate + (2R)-3-phosphoglycerate + 2 H(+). Its function is as follows. RuBisCO catalyzes two reactions: the carboxylation of D-ribulose 1,5-bisphosphate, the primary event in carbon dioxide fixation, as well as the oxidative fragmentation of the pentose substrate in the photorespiration process. Both reactions occur simultaneously and in competition at the same active site. In Pinus krempfii (Krempf's pine), this protein is Ribulose bisphosphate carboxylase large chain.